A 299-amino-acid polypeptide reads, in one-letter code: Bifunctional protein FolD (299 aa).

Residues 169-171, Ser-194, and Ile-235 contribute to the NADP(+) site; that span reads GRS.

This sequence belongs to the tetrahydrofolate dehydrogenase/cyclohydrolase family. Homodimer.

The enzyme catalyses (6R)-5,10-methylene-5,6,7,8-tetrahydrofolate + NADP(+) = (6R)-5,10-methenyltetrahydrofolate + NADPH. It catalyses the reaction (6R)-5,10-methenyltetrahydrofolate + H2O = (6R)-10-formyltetrahydrofolate + H(+). Its pathway is one-carbon metabolism; tetrahydrofolate interconversion. In terms of biological role, catalyzes the oxidation of 5,10-methylenetetrahydrofolate to 5,10-methenyltetrahydrofolate and then the hydrolysis of 5,10-methenyltetrahydrofolate to 10-formyltetrahydrofolate. The polypeptide is Bifunctional protein FolD (Nostoc sp. (strain PCC 7120 / SAG 25.82 / UTEX 2576)).